We begin with the raw amino-acid sequence, 253 residues long: MLIQDTIFYRPDWRWHNFLKYLTNNLSKYNCLEKTIPSEYSYKDSTYGSKKSKKNVNLSTWGVTHKKRIKFARAVCINSPNYSVLNFLIIPNTIYNVPFFGVDFVSLPNSYLLVLDFQPSLKIQNQYNNDLLEKLIKLKNHCHSSLPLAEKMSADVARFFSPGVIWSKLPKEERSDFLITNQLYTSFKEYLDLYLEILFESKEVNIELQKELTNGQINYLNYRRDNDPARPMLSSLFGQEFTESLIEEVLFTT.

It belongs to the HY2 family.

The enzyme catalyses (3Z)-phycoerythrobilin + oxidized 2[4Fe-4S]-[ferredoxin] = 15,16-dihydrobiliverdin + reduced 2[4Fe-4S]-[ferredoxin] + 2 H(+). Functionally, catalyzes the two-electron reduction of the C2 and C3(1) diene system of 15,16-dihydrobiliverdin. The polypeptide is Phycoerythrobilin:ferredoxin oxidoreductase (Prochlorococcus marinus (strain AS9601)).